The chain runs to 193 residues: Probable GTP-binding protein EngB (193 aa).

Residues Met-22 to Leu-193 form the EngB-type G domain. GTP is bound by residues Gly-30–Ser-37, Gly-57–Thr-61, Asp-75–Gly-78, Thr-142–Asp-145, and Phe-174–Ser-176. Residues Ser-37 and Thr-59 each contribute to the Mg(2+) site.

This sequence belongs to the TRAFAC class TrmE-Era-EngA-EngB-Septin-like GTPase superfamily. EngB GTPase family. Mg(2+) serves as cofactor.

Necessary for normal cell division and for the maintenance of normal septation. This Natranaerobius thermophilus (strain ATCC BAA-1301 / DSM 18059 / JW/NM-WN-LF) protein is Probable GTP-binding protein EngB.